Here is a 378-residue protein sequence, read N- to C-terminus: Erythronate-4-phosphate dehydrogenase (378 aa).

Residues Ser-45 and Thr-66 each coordinate substrate. NAD(+)-binding residues include Asp-146 and Thr-175. The active site involves Arg-208. Residue Asp-232 coordinates NAD(+). Glu-237 is a catalytic residue. Residue His-254 is the Proton donor of the active site. Residue Gly-257 participates in NAD(+) binding. Tyr-258 provides a ligand contact to substrate.

The protein belongs to the D-isomer specific 2-hydroxyacid dehydrogenase family. PdxB subfamily. As to quaternary structure, homodimer.

It is found in the cytoplasm. The catalysed reaction is 4-phospho-D-erythronate + NAD(+) = (R)-3-hydroxy-2-oxo-4-phosphooxybutanoate + NADH + H(+). Its pathway is cofactor biosynthesis; pyridoxine 5'-phosphate biosynthesis; pyridoxine 5'-phosphate from D-erythrose 4-phosphate: step 2/5. Catalyzes the oxidation of erythronate-4-phosphate to 3-hydroxy-2-oxo-4-phosphonooxybutanoate. The chain is Erythronate-4-phosphate dehydrogenase from Escherichia coli O127:H6 (strain E2348/69 / EPEC).